We begin with the raw amino-acid sequence, 266 residues long: Heat-inducible transcription repressor HrcA (266 aa).

It belongs to the HrcA family.

Negative regulator of class I heat shock genes (grpE-dnaK-dnaJ and groELS operons). Prevents heat-shock induction of these operons. This is Heat-inducible transcription repressor HrcA from Helicobacter pylori (strain J99 / ATCC 700824) (Campylobacter pylori J99).